The primary structure comprises 490 residues: Cytochrome P450 2C14 (490 aa).

Cysteine 435 is a heme binding site.

This sequence belongs to the cytochrome P450 family. Heme serves as cofactor.

It localises to the endoplasmic reticulum membrane. The protein resides in the microsome membrane. It catalyses the reaction an organic molecule + reduced [NADPH--hemoprotein reductase] + O2 = an alcohol + oxidized [NADPH--hemoprotein reductase] + H2O + H(+). Functionally, cytochromes P450 are a group of heme-thiolate monooxygenases. In liver microsomes, this enzyme is involved in an NADPH-dependent electron transport pathway. It oxidizes a variety of structurally unrelated compounds, including steroids, fatty acids, and xenobiotics. This chain is Cytochrome P450 2C14 (CYP2C14), found in Oryctolagus cuniculus (Rabbit).